The chain runs to 527 residues: uncharacterized protein (527 aa).

Positions 1–93 constitute a PE domain; sequence MSYMIAVPDM…AGAYASAEAT (93 aa). 3 stretches are compositionally biased toward gly residues: residues 264–286, 292–384, and 472–515; these read IHGHGGVGGDGGTGGQGGDGVQG, GAAG…AGNG, and NGGD…GGSR. Disordered regions lie at residues 264–384 and 472–527; these read IHGH…AGNG and NGGD…TPGQ.

Belongs to the mycobacterial PE family. PGRS subfamily.

This is an uncharacterized protein from Mycobacterium tuberculosis (strain CDC 1551 / Oshkosh).